Here is an 836-residue protein sequence, read N- to C-terminus: DNA gyrase subunit A (836 aa).

The region spanning 46 to 510 (LPDARDGLKP…ISEEIDDESL (465 aa)) is the Topo IIA-type catalytic domain. The active-site O-(5'-phospho-DNA)-tyrosine intermediate is the tyrosine 134. Residues 537-543 (QHRGGVG) carry the GyrA-box motif.

Belongs to the type II topoisomerase GyrA/ParC subunit family. Heterotetramer, composed of two GyrA and two GyrB chains. In the heterotetramer, GyrA contains the active site tyrosine that forms a transient covalent intermediate with DNA, while GyrB binds cofactors and catalyzes ATP hydrolysis.

It is found in the cytoplasm. The enzyme catalyses ATP-dependent breakage, passage and rejoining of double-stranded DNA.. In terms of biological role, a type II topoisomerase that negatively supercoils closed circular double-stranded (ds) DNA in an ATP-dependent manner to modulate DNA topology and maintain chromosomes in an underwound state. Negative supercoiling favors strand separation, and DNA replication, transcription, recombination and repair, all of which involve strand separation. Also able to catalyze the interconversion of other topological isomers of dsDNA rings, including catenanes and knotted rings. Type II topoisomerases break and join 2 DNA strands simultaneously in an ATP-dependent manner. This Mycoplasma genitalium (strain ATCC 33530 / DSM 19775 / NCTC 10195 / G37) (Mycoplasmoides genitalium) protein is DNA gyrase subunit A.